The chain runs to 2200 residues: MGSLSSARESAQRITFFGDQTVDTLLCIKDLANRSHQLPILRRYLREAADKLQLLLSQIELGDYECYRNFETIVELAEIYSKQDGTYEPIGCALWTISQFADYLSRSETDPSILTLSDSAAQPTYVVGVCGGLLLGAAAATARDINELLDIGRKLVDVSFNLGVAQWKRAMDIEGKPGRWAVAIVNVPPKQIRNIITAFNEDMAIPKHRQFYISFLAKGWAAISGPPSIFPELWEYSSTLSSASKMDLPLGTPAHAAHLRSLNIEELIGSGSVLDLPVRQDRLVISTSTCKPFESQTFGSLLSSSLHDITGETLHIAGVNDYVASCLSRETLVQVSSFGPTSQIGSFKKALEDSGLKVDLDLSVPESKTPNLLKNPDARDGSNMIAIVGQSVRLPGSDDVKTFWENLKAGQTFESEIPPSRFDLQNYYDTTGAKKSSVTTRFGHFLDRPGLFDCRLFNVSPREAKQMDPIQRLLLMCSYEALQTAGYSPDSSLSTNRMRVATYFGQSGDDWRQGRASQDVDIYYIPGTIRSFAPGKLNYHYKWGGGNYSVDSACAASTTSVIMACNALLGRECDMALAGGGQLHLEPENYAGLSRAGFLSKTTGGCKTFREDADGYCRGEGIGVVVLKRLEDALADNDNVLAVVRGADRNYSWDASSITHPSANAQATVIQRVLRNTGVEPADIGFVEMHGTGTTAGDSVEMKTVTTVFGSRPKDNPLYIGAVKANFGHGEAAAGITSLLKAVQMLGQKTIPRQPGFPGPKDPTFDHLDAMNIRIPDSSFPFPTPTRPFSQDGKMRILVNNFDASGGNNCVLLEEAPDKNVSQIQDPRQYYTVAISARTTKSLQKNMERLSDYLVKHPDTPVADVAYTSTARRIHEDLKRSYTVDSTESLVGLLQADLKKDLTGIRPATPRSVVFAFTGQGSQYSGMTKQLFETCTPFRESVQSLHDLAVWQDFPSFLNLFTDDVTDEISASPIQTQLAIVVLEMSLANLWKSWGVEPDLVIGYSLGEYVALYVSGVLSAHDVLFLVGNRAQLMDERCEIGSYSMLAVQASPEDLEEPLKAYPTSNVACRGAPRSTVVSGPSEDIAKLHAELKEKSISGTILNVPYGFHCAQVDPILEDFRDLLDRVPFSKPRIPVASSLDGVIVTDDDVFSPSYMVRQTREPVAFVSALKAIETSHLVDNTSLWVEIGPKRVLNSFIKATLAVDHDRLLHSVDEKASNWRTIATAITACWQGGVSIKWQNFHRQFTKHLRLVDLPTYAFDLKDYWIEPAAPIVQQRSAAEPLRQVAVPAVPGFPTASLQRVREERIQGDNAAVTFESTLSHPDLMGLIRGHQVNGVDLFPASGWWDMAYTAAKYIHHRIQPSRGAAPGLSMLDCSITHPLMPSASEDQQKLVIIVAKKQAGSSVVEVSFKSQEKSVEQDHGSCKIRFESKADWEAEWSRSAHFIKAAKNNVVTNATRPDGNGHKLPKPVVYTLFSNFVNYSGDFKGIQQVYLNADFQREVVADVVLPAGMYNFNLNPYWSDALIHACGFMLHSDPDLPTQDCFLFNGFEELRFLMDDLLPGVPYTSYVFMHDTNSQEVPAKRTRNVTGDIYIFQGEKIVGTVQGVVFQRLTKRILTTILGKSQDHHNSNEVRNGNATTTHTNPPAHATTQSFFAPPGIKPAVAFSSAPATVGEETAEAVIAKILTKTGANRASLSESTTLGEIGLDSLEWIELVGVFRSALDIEVPASFFFEYPKVLRLRQAIAELPLEGEKEESGSSSPDSPYGMLTPATGRFTPITASRSTHNSDGPANYANIVLDIVLSQTGFDKDDVLPSTRFDDMGLDSLCTMEVVSLVREQTGLDLPASFFHHHPTVADVRKNLGPNTEDKSKDSVKASASIAVSEPATELVVVHHPGNSPAPESLPIIDEDLKDYHCDFFLMQGSSDSAEIPMFFLPDGTGYPAVLLKLPPVFKGDNPLFTCKSPLLHRAEGREVACTIEGLALSYAEAIRRTRPHGPYLLAGYSLGAAYAYEVAKILADAGEIVQGLLFVDFNMAASVGLEHRERKPVPTNLNVGVMEQVGWMNGIHNDEKNFHIPPAPPKIKFHALSVFKSLTRYFPKPMTPSQRPRNTYALWAGAGMEDLLGPSNAGFLPEFGIIDWQMGSRRENNGPAGWENFIGGPVRCATVPCDHLSIMMSTDWVGTTANIIKDLLEDALSNPGTP.

The region spanning 16–255 is the Starter acyltransferase (SAT) domain; that stretch reads FFGDQTVDTL…MDLPLGTPAH (240 aa). Residues 382 to 815 form the Ketosynthase family 3 (KS3) domain; the sequence is SNMIAIVGQS…GGNNCVLLEE (434 aa). Residues Cys554, His690, and His729 each act as for beta-ketoacyl synthase activity in the active site. In terms of domain architecture, Malonyl-CoA:ACP transacylase (MAT) spans 914-1202; it reads VFAFTGQGSQ…VLNSFIKATL (289 aa). Residues 1296–1621 form a product template (PT) domain region; the sequence is TASLQRVREE…TKRILTTILG (326 aa). Residues 1300–1433 form an N-terminal hotdog fold region; that stretch reads QRVREERIQG…CKIRFESKAD (134 aa). Residues 1300–1617 enclose the PKS/mFAS DH domain; the sequence is QRVREERIQG…FQRLTKRILT (318 aa). His1332 functions as the Proton acceptor; for dehydratase activity in the catalytic mechanism. Residues 1462 to 1617 are C-terminal hotdog fold; sequence NGHKLPKPVV…FQRLTKRILT (156 aa). The active-site Proton donor; for dehydratase activity is Asp1522. Residues 1625 to 1652 form a disordered region; the sequence is DHHNSNEVRNGNATTTHTNPPAHATTQS. Residues 1636–1650 are compositionally biased toward low complexity; the sequence is NATTTHTNPPAHATT. Carrier domains follow at residues 1671–1748 and 1791–1865; these read TVGE…AELP and ANYA…GPNT. An O-(pantetheine 4'-phosphoryl)serine mark is found at Ser1708 and Ser1825. Residues 1931 to 2173 are thioesterase (TE) domain; it reads MFFLPDGTGY…TVPCDHLSIM (243 aa).

It depends on pantetheine 4'-phosphate as a cofactor.

Its pathway is secondary metabolite biosynthesis. In terms of biological role, non-reducing polyketide synthase; part of the gene cluster that mediates the biosynthesis of polyesters containing 2,4-dihydroxy-6-(2-hydroxypropyl)benzoate and 3-hydroxybutyrate moieties, such as talapolyester G, 15G256beta and 15G256beta-2; as well as to oxidized derivatives such as 15G256alpha. The biosynthesis of the polyesters probably starts with the formation of the diketide 3-hydroxybutyryl-S-ACP catalyzed by the partially reducing polyketide synthase tpeA. The acceptance of 3-hydroxybutyryl by the non-reducing polyketide synthase tpeB would initiate further elongation and cyclization, catalyzed by KS and PT, respectively, to form 2,4-dihydroxy-6-(2-hydroxyn-propyl)benzoyl-S-ACP intermediate. The TE domain could catalyze lactonization at this step to yield 6-hydroxymellein as a derailment product. The polyesterification process maybe occurs when additional molecules of 3-hydroxybutyryl are transferred to tpeB. Following the first esterification step, an intramolecular cyclization catalyzed by the TE domain of tpeB would give talarodioxadione 1, whereas the ethyl esterification of talapolyester G perhaps happens spontaneously. Further oxidation by the cytochrome P450 monooxygenase tpeC then leads to the formation of oxidized derivatives. This chain is Non-reducing polyketide synthase tpeB, found in Talaromyces stipitatus (strain ATCC 10500 / CBS 375.48 / QM 6759 / NRRL 1006) (Penicillium stipitatum).